We begin with the raw amino-acid sequence, 315 residues long: Coproporphyrin III ferrochelatase (315 aa).

Fe-coproporphyrin III contacts are provided by residues Y13, R30, 46–47 (RY), S54, and Y125. Fe(2+) contacts are provided by H183 and E264.

It belongs to the ferrochelatase family.

Its subcellular location is the cytoplasm. It carries out the reaction Fe-coproporphyrin III + 2 H(+) = coproporphyrin III + Fe(2+). It functions in the pathway porphyrin-containing compound metabolism; protoheme biosynthesis. In terms of biological role, involved in coproporphyrin-dependent heme b biosynthesis. Catalyzes the insertion of ferrous iron into coproporphyrin III to form Fe-coproporphyrin III. In Anoxybacillus flavithermus (strain DSM 21510 / WK1), this protein is Coproporphyrin III ferrochelatase.